The primary structure comprises 453 residues: UDP-N-acetylmuramoylalanine--D-glutamate ligase (453 aa).

120-126 (GSNGKST) lines the ATP pocket.

The protein belongs to the MurCDEF family.

The protein localises to the cytoplasm. It carries out the reaction UDP-N-acetyl-alpha-D-muramoyl-L-alanine + D-glutamate + ATP = UDP-N-acetyl-alpha-D-muramoyl-L-alanyl-D-glutamate + ADP + phosphate + H(+). Its pathway is cell wall biogenesis; peptidoglycan biosynthesis. Cell wall formation. Catalyzes the addition of glutamate to the nucleotide precursor UDP-N-acetylmuramoyl-L-alanine (UMA). This Teredinibacter turnerae (strain ATCC 39867 / T7901) protein is UDP-N-acetylmuramoylalanine--D-glutamate ligase.